Reading from the N-terminus, the 74-residue chain is Coleoptericin (74 aa).

A disordered region spans residues 1-74 (SLQGGAPNFP…TWHVGGTYRR (74 aa)).

The protein belongs to the coleoptericin family.

It localises to the secreted. Its function is as follows. Responsible for the anti Gram-negative activity of immune hemolymph of Z.atratus. The sequence is that of Coleoptericin from Zophobas atratus (Giant mealworm beetle).